The sequence spans 757 residues: MMWPQPPTFSLFLLLLLSQAPSSRPQSSGTKKLRLVGPTDRPEEGRLEVLHQGQWGTVCDDDFALQEATVACRQLGFESALTWAHSAKYGQGEGPIWLDNVRCLGTEKTLDQCGSNGWGVSDCRHSEDVGVVCHPRRQHGYHSEKVSNALGPQGRRLEEVRLKPILASAKRHSPVTEGAVEVRYDGHWRQVCDQGWTMNNSRVVCGMLGFPSQTSVNSHYYRKVWNLKMKDPKSRLNSLTKKNSFWIHRVDCLGTEPHLAKCQVQVAPGRGKLRPACPGGMHAVVSCVAGPHFRRQKPKPTRKESHAEELKVRLRSGAQVGEGRVEVLMNRQWGTVCDHRWNLISASVVCRQLGFGSAREALFGAQLGQGLGPIHLSEVRCRGYERTLGDCLALEGSQNGCQHANDAAVRCNIPDMGFQNKVRLAGGRNSEEGVVEVQVEVNGVPRWGTVCSDHWGLTEAMVTCRQLGLGFANFALKDTWYWQGTPEAKEVVMSGVRCSGTEMALQQCQRHGPVHCSHGPGRFSAGVACMNSAPDLVMNAQLVQETAYLEDRPLSMLYCAHEENCLSKSADHMDWPYGYRRLLRFSSQIYNLGRADFRPKAGRHSWIWHQCHRHYHSIEVFTHYDLLTLNGSKVAEGHKASFCLEDTNCPSGVQRRYACANFGEQGVAVGCWDTYRHDIDCQWVDITDVGPGDYIFQVVVNPTNDVAESDFSNNMIRCRCKYDGQRVWLHNCHTGDSYRANAELSLEQEQRLRNNLI.

The first 25 residues, 1 to 25, serve as a signal peptide directing secretion; it reads MMWPQPPTFSLFLLLLLSQAPSSRP. SRCR domains are found at residues 33–134, 160–288, 312–412, and 422–530; these read LRLV…VVCH, VRLK…VSCV, VRLR…VRCN, and VRLA…VACM. Intrachain disulfides connect C59–C123, C72–C133, C103–C113, C192–C277, C205–C287, C252–C262, C337–C401, C350–C411, C381–C391, C451–C516, C464–C529, C498–C508, C559–C565, C611–C659, C643–C649, C671–C681, and C718–C732. A glycan (N-linked (GlcNAc...) asparagine) is linked at N199. A lysyl-oxidase like region spans residues 534-737; the sequence is PDLVMNAQLV…WLHNCHTGDS (204 aa). H612, H614, and H616 together coordinate Cu cation. N630 is a glycosylation site (N-linked (GlcNAc...) asparagine). The segment at residues 639 to 675 is a cross-link (lysine tyrosylquinone (Lys-Tyr)); the sequence is KASFCLEDTNCPSGVQRRYACANFGEQGVAVGCWDTY. The residue at position 675 (Y675) is a 2',4',5'-topaquinone.

It belongs to the lysyl oxidase family. Requires Cu cation as cofactor. The cofactor is lysine tyrosylquinone residue. Post-translationally, the lysine tyrosylquinone cross-link (LTQ) is generated by condensation of the epsilon-amino group of a lysine with a topaquinone produced by oxidation of tyrosine. In terms of processing, may be proteolytically cleaved by BMP1.

It localises to the secreted. It is found in the extracellular space. The catalysed reaction is L-lysyl-[protein] + O2 + H2O = (S)-2-amino-6-oxohexanoyl-[protein] + H2O2 + NH4(+). In terms of biological role, catalyzes the oxidative deamination of lysine and hydroxylysine residues in collagen and elastin, resulting in the formation of covalent cross-linkages, and the stabilization of collagen and elastin fibers. The protein is Lysyl oxidase homolog 4 (Loxl4) of Mus musculus (Mouse).